Consider the following 289-residue polypeptide: tRNA pseudouridine synthase B (289 aa).

The Nucleophile role is filled by Asp38.

The protein belongs to the pseudouridine synthase TruB family. Type 1 subfamily.

The enzyme catalyses uridine(55) in tRNA = pseudouridine(55) in tRNA. In terms of biological role, responsible for synthesis of pseudouridine from uracil-55 in the psi GC loop of transfer RNAs. The chain is tRNA pseudouridine synthase B from Clostridium tetani (strain Massachusetts / E88).